Reading from the N-terminus, the 741-residue chain is Pentatricopeptide repeat-containing protein At1g05670, mitochondrial (741 aa).

The transit peptide at 1–21 (MKKPFTGLLMKRGTLSSFRNF) directs the protein to the mitochondrion. PPR repeat units lie at residues 174-208 (DPRVFDVFFQVLVDFGLLREARRVFEKMLNYGLVL), 209-244 (SVDSCNVYLTRLSKDCYKTATAIIVFREFPEVGVCW), 245-279 (NVASYNIVIHFVCQLGRIKEAHHLLLLMELKGYTP), 280-314 (DVISYSTVVNGYCRFGELDKVWKLIEVMKRKGLKP), 315-349 (NSYIYGSIIGLLCRICKLAEAEEAFSEMIRQGILP), 350-384 (DTVVYTTLIDGFCKRGDIRAASKFFYEMHSRDITP), 385-419 (DVLTYTAIISGFCQIGDMVEAGKLFHEMFCKGLEP), 420-454 (DSVTFTELINGYCKAGHMKDAFRVHNHMIQAGCSP), 455-489 (NVVTYTTLIDGLCKEGDLDSANELLHEMWKIGLQP), 490-524 (NIFTYNSIVNGLCKSGNIEEAVKLVGEFEAAGLNA), 525-559 (DTVTYTTLMDAYCKSGEMDKAQEILKEMLGKGLQP), 560-594 (TIVTFNVLMNGFCLHGMLEDGEKLLNWMLAKGIAP), 595-629 (NATTFNSLVKQYCIRNNLKAATAIYKDMCSRGVGP), 630-664 (DGKTYENLVKGHCKARNMKEAWFLFQEMKGKGFSV), and 665-699 (SVSTYSVLIKGFLKRKKFLEAREVFDQMRREGLAA).

Belongs to the PPR family. P subfamily.

The protein resides in the mitochondrion. The chain is Pentatricopeptide repeat-containing protein At1g05670, mitochondrial from Arabidopsis thaliana (Mouse-ear cress).